A 275-amino-acid polypeptide reads, in one-letter code: Elongation factor Ts (275 aa).

Positions 80-83 (TDFV) are involved in Mg(2+) ion dislocation from EF-Tu.

The protein belongs to the EF-Ts family.

It localises to the cytoplasm. Associates with the EF-Tu.GDP complex and induces the exchange of GDP to GTP. It remains bound to the aminoacyl-tRNA.EF-Tu.GTP complex up to the GTP hydrolysis stage on the ribosome. The sequence is that of Elongation factor Ts from Kineococcus radiotolerans (strain ATCC BAA-149 / DSM 14245 / SRS30216).